The following is a 1084-amino-acid chain: MPPCELISASNGASFQLSDLYFPSFLDLKQFVGETFHISVDDILLLLSYGIILKRSQWDSTKIRSEGLKSIYVFDRKLFNEDIELAVEERFRLFKPLDSPMSDLSEVDRNIVLRNMGWLKALQSDVEFFQLSIEQTRKEVQNMLDCGVVMLEYLKNYCHEVETLYNSHVGFLNKLHEHSASSQWREVYDSVLEAVKIDQQRSLASFFQIDELNQIEAKIRHTDHELNMKLKELKKTIDTCYQHRKTLVSELENIKSISVVSPDCMDKQMTDKFNEMAQELEAASNEWVQNSENNDHISEKVKQMKDSHIPNLQTISQSLFNKASKIIETKTDMQRQLRSLYISVAKSQMDIIEVKSTLTKDMKSDMKLLQTYELQLSQVLDLPMCYGLYLIELYRQQLWMDNYTHIKDQHESALQVMLQEEIHQRKMWYRDFQWISKFLKVDQSLPSTVSITPLKALRRVDLLQINEYFNQLSSAKVSETTLNVLKSKLSQAEMDNMLPELSEQSSNDTGAAIEGYKSRIKKLENLLLDAQFQRYDSWPSGILNKEIAMVQMFRNNTLNNKVQRSSTDDISNSIQQSYSKTLGDVQNLQKAISEYSGLTDTLKEELSTLKSQISNMEVEKNAYKESMANLNKELSNLLINRENFHTEMMERSNDFKKHLALVGEENEQLTKQNQQLSNEIIESQKKYEELNKIKDDLLLNMANQETQAEQERAALQEEIESLKKEVGQLQMAKSSLTESEELLGINKQLEKTLYDVFQGSIFLLESIGLLLSKDIDGKFQIVRVKGLRKDLDSSVIDMNGSLVKSVVSHEIKDTFESIKDSLDYKPHENFISYTEKLFGNQLFEMAVIRRFNDIESLAKKLRKENKNKKILLQKYTNDKITINNFQLGDLALFLPINDQELLLNSSVSSLNSSFSSIDLNSSTQSMIPPRVIPNRVEPASNTNNSNPSSVPEDMGSPNMNRVNTMGNVKVNANIGSNNSNNNYVNTGNANGNNKPETNIDTTSSTNAESPKKQIVWAIFTATNTEVKYILRNTMSNYELLREKEWAVGRITALEKNIVMEGARNPFKFPQNTVWFEVDALFNLS.

2 coiled-coil regions span residues 585–739 (VQNL…LTES) and 847–879 (VIRR…TNDK). Disordered stretches follow at residues 925–961 (SMIP…NMNR) and 973–1007 (NIGS…STNA). 2 stretches are compositionally biased toward low complexity: residues 940–949 (SNTNNSNPSS) and 973–993 (NIGS…NGNN). Residues 994-1007 (KPETNIDTTSSTNA) show a composition bias toward polar residues.

This sequence belongs to the ATG11 family. Homodimer and potential homooligomers. Interacts with ATG1 kinase and the ATG19 and ATG34 cargo protein transporters. Interacts with ATG9, ATG17 and ATG20.

The protein localises to the preautophagosomal structure membrane. Its subcellular location is the vacuole membrane. Functionally, involved in cytoplasm to vacuole transport (Cvt), pexophagy, mitophagy and nucleophagy. Recruits mitochondria for their selective degradation via autophagy (mitophagy) during starvation, through its interaction with ATG32. Works as scaffold proteins that recruit ATG proteins to the pre-autophagosome (PAS), the site of vesicle/autophagosome formation. Required for ATG9 anterograde transport from the mitochondria to the PAS. Also recruits the ATG19-prAPE1 complex to the PAS. Required for the Cvt vesicles completion. The chain is Autophagy-related protein 11 from Kluyveromyces marxianus (strain DMKU3-1042 / BCC 29191 / NBRC 104275) (Yeast).